Here is a 143-residue protein sequence, read N- to C-terminus: Transcriptional regulator MraZ (143 aa).

SpoVT-AbrB domains lie at 5–47 and 76–119; these read EYNH…SMDE and ATEC…SSDQ.

Belongs to the MraZ family. In terms of assembly, forms oligomers.

The protein resides in the cytoplasm. It is found in the nucleoid. The chain is Transcriptional regulator MraZ from Alkaliphilus metalliredigens (strain QYMF).